The sequence spans 189 residues: Elongation factor P (189 aa).

Belongs to the elongation factor P family.

It is found in the cytoplasm. Its pathway is protein biosynthesis; polypeptide chain elongation. Involved in peptide bond synthesis. Stimulates efficient translation and peptide-bond synthesis on native or reconstituted 70S ribosomes in vitro. Probably functions indirectly by altering the affinity of the ribosome for aminoacyl-tRNA, thus increasing their reactivity as acceptors for peptidyl transferase. The polypeptide is Elongation factor P (Xanthobacter autotrophicus (strain ATCC BAA-1158 / Py2)).